Here is an 82-residue protein sequence, read N- to C-terminus: Small ribosomal subunit protein bS16 (82 aa).

Belongs to the bacterial ribosomal protein bS16 family.

In Elusimicrobium minutum (strain Pei191), this protein is Small ribosomal subunit protein bS16.